The following is a 336-amino-acid chain: Cytoskeleton protein RodZ (336 aa).

At 1 to 111 the chain is on the cytoplasmic side; the sequence is MNTEATHDKT…LGKRRKKRDG (111 aa). Positions 19–71 constitute an HTH cro/C1-type domain; that stretch reads LRNAREQLGLSQQAVAERLCLKVSTVRDIEEDKAPADLASTFLRGYIRSYAKL. Positions 30–49 form a DNA-binding region, H-T-H motif; it reads QQAVAERLCLKVSTVRDIEE. Residues 112–132 form a helical; Signal-anchor for type II membrane protein membrane-spanning segment; the sequence is WLMSFTWLVLFVVIGLTGAWW. Over 133-336 the chain is Periplasmic; it reads WQNHKAQQEE…TVSAEQSAAQ (204 aa). Residues 152-164 are compositionally biased toward low complexity; the sequence is AALNNSGNNGAQS. A disordered region spans residues 152–235; it reads AALNNSGNNG…TTTGNVNVTQ (84 aa). 2 stretches are compositionally biased toward polar residues: residues 165–190 and 200–217; these read VPLN…TVEP and PDQT…QANV. Residues 220-235 show a composition bias toward low complexity; sequence APAVTPTTTGNVNVTQ.

This sequence belongs to the RodZ family.

Its subcellular location is the cell inner membrane. Functionally, cytoskeletal protein that is involved in cell-shape control through regulation of the length of the long axis. This chain is Cytoskeleton protein RodZ, found in Enterobacter sp. (strain 638).